Reading from the N-terminus, the 1086-residue chain is Phosphinothricin tripeptide synthetase PhsC (1086 aa).

The tract at residues 22 to 43 (RLRAAAAPGPDPAIPRRPDDDG) is disordered. The condensation stretch occupies residues 45–484 (VPLSFAQHRL…LAALPVLTRD (440 aa)). Residues 510–901 (LEDSARRHPD…GRTDHQVKLR (392 aa)) form an adenylation region. The segment at 983 to 1007 (GKLDREALPDPLAQSGDTAGNRPPL) is disordered. The 76-residue stretch at 1006–1081 (PLLDPVEERI…GLARSVSAER (76 aa)) folds into the Carrier domain. S1041 is subject to O-(pantetheine 4'-phosphoryl)serine.

It belongs to the NRP synthetase family. Requires pantetheine 4'-phosphate as cofactor.

The enzyme catalyses holo-[peptidyl-carrier protein] + L-alanine + ATP = L-alanyl-[peptidyl-carrier protein] + AMP + diphosphate. The protein operates within secondary metabolite biosynthesis; bialaphos biosynthesis. Involved in the biosynthesis of phosphinothricin tripeptide (PTT), also known as bialaphos (BA), a natural-product antibiotic and potent herbicide. Adenylates L-alanine and loads it onto a peptidyl carrier domain via a thioester linkage to the phosphopanthetheine moiety. Shows weaker activity with aminobutyric acid and L-serine. The protein is Phosphinothricin tripeptide synthetase PhsC of Streptomyces viridochromogenes (strain DSM 40736 / JCM 4977 / BCRC 1201 / Tue 494).